The following is a 348-amino-acid chain: Phenylalanine--tRNA ligase alpha subunit (348 aa).

Mg(2+) is bound at residue E262.

The protein belongs to the class-II aminoacyl-tRNA synthetase family. Phe-tRNA synthetase alpha subunit type 1 subfamily. As to quaternary structure, tetramer of two alpha and two beta subunits. It depends on Mg(2+) as a cofactor.

The protein localises to the cytoplasm. It carries out the reaction tRNA(Phe) + L-phenylalanine + ATP = L-phenylalanyl-tRNA(Phe) + AMP + diphosphate + H(+). This Streptococcus pneumoniae (strain JJA) protein is Phenylalanine--tRNA ligase alpha subunit.